Here is a 535-residue protein sequence, read N- to C-terminus: T-complex protein 1 subunit beta (535 aa).

At Ala2 the chain carries N-acetylalanine. Ser3 bears the Phosphoserine mark. Lys13 is modified (N6-acetyllysine). Gly44 lines the ADP pocket. Residue Gly44 coordinates ATP. A Mg(2+)-binding site is contributed by Asp97. Gly98, Thr99, Thr100, Ser101, Ser168, and Ser169 together coordinate ADP. Positions 98, 99, and 100 each coordinate ATP. Lys181 is subject to N6-acetyllysine. Lys248 is covalently cross-linked (Glycyl lysine isopeptide (Lys-Gly) (interchain with G-Cter in SUMO2)). A Phosphoserine modification is found at Ser260. A Phosphothreonine modification is found at Thr261. 3 residues coordinate ADP: Gly410, Glu495, and Lys500. ATP-binding residues include Glu495 and Lys500.

This sequence belongs to the TCP-1 chaperonin family. As to quaternary structure, component of the chaperonin-containing T-complex (TRiC), a hexadecamer composed of two identical back-to-back stacked rings enclosing a protein folding chamber. Each ring is made up of eight different subunits: TCP1/CCT1, CCT2, CCT3, CCT4, CCT5, CCT6A/CCT6, CCT7, CCT8. Interacts with PACRG. Interacts with FLCN. Interacts with DLEC1. Interacts with SVEP1. In terms of processing, the N-terminus is blocked.

Its subcellular location is the cytoplasm. The enzyme catalyses ATP + H2O = ADP + phosphate + H(+). Functionally, component of the chaperonin-containing T-complex (TRiC), a molecular chaperone complex that assists the folding of actin, tubulin and other proteins upon ATP hydrolysis. The TRiC complex mediates the folding of WRAP53/TCAB1, thereby regulating telomere maintenance. As part of the TRiC complex may play a role in the assembly of BBSome, a complex involved in ciliogenesis regulating transports vesicles to the cilia. The chain is T-complex protein 1 subunit beta (Cct2) from Mus musculus (Mouse).